A 141-amino-acid polypeptide reads, in one-letter code: Drosulfakinins (141 aa).

The signal sequence occupies residues 1–31 (MGLRSCTHLATLFMTLWAVAFCFLVVVPIPA). A propeptide spanning residues 32–73 (QTTSLQNAKDDRRLQELESKIGAESDQTNANLVGPSFSRFGD) is cleaved from the precursor. Phe82 bears the Phenylalanine amide mark. Residues 86–111 (VPLISRPMIPIELDLLMDNDDERTKA) constitute a propeptide that is removed on maturation. At Tyr117 the chain carries Sulfotyrosine. The residue at position 122 (Phe122) is a Phenylalanine amide. Tyr134 is modified (sulfotyrosine). Phe139 carries the phenylalanine amide modification.

It belongs to the gastrin/cholecystokinin family.

The protein localises to the secreted. Functionally, drosulfakinin-0 (DSK 0) plays diverse biological roles including regulating gut muscle contraction in adults but not in larvae. In Drosophila simulans (Fruit fly), this protein is Drosulfakinins.